A 65-amino-acid polypeptide reads, in one-letter code: KDGYPMDNKGCKIACVINNQYCETECVTVLKGKKGYCYFWKLACYCEGLPNWAKVWDRATNKCRA.

The 64-residue stretch at 1–64 (KDGYPMDNKG…VWDRATNKCR (64 aa)) folds into the LCN-type CS-alpha/beta domain. 4 cysteine pairs are disulfide-bonded: Cys11-Cys63, Cys15-Cys37, Cys22-Cys44, and Cys26-Cys46.

The protein belongs to the long (4 C-C) scorpion toxin superfamily. Sodium channel inhibitor family. Beta subfamily. Expressed by the venom gland.

It localises to the secreted. Beta toxins bind voltage-independently at site-4 of sodium channels (Nav) and shift the voltage of activation toward more negative potentials thereby affecting sodium channel activation and promoting spontaneous and repetitive firing. In Centruroides bicolor (Scorpion), this protein is Toxin Cbi1.